A 388-amino-acid polypeptide reads, in one-letter code: UDP-4-amino-4-deoxy-L-arabinose--oxoglutarate aminotransferase (388 aa).

At lysine 183 the chain carries N6-(pyridoxal phosphate)lysine.

The protein belongs to the DegT/DnrJ/EryC1 family. ArnB subfamily. In terms of assembly, homodimer. The cofactor is pyridoxal 5'-phosphate.

The enzyme catalyses UDP-4-amino-4-deoxy-beta-L-arabinose + 2-oxoglutarate = UDP-beta-L-threo-pentopyranos-4-ulose + L-glutamate. Its pathway is nucleotide-sugar biosynthesis; UDP-4-deoxy-4-formamido-beta-L-arabinose biosynthesis; UDP-4-deoxy-4-formamido-beta-L-arabinose from UDP-alpha-D-glucuronate: step 2/3. It participates in bacterial outer membrane biogenesis; lipopolysaccharide biosynthesis. Its function is as follows. Catalyzes the conversion of UDP-4-keto-arabinose (UDP-Ara4O) to UDP-4-amino-4-deoxy-L-arabinose (UDP-L-Ara4N). The modified arabinose is attached to lipid A and is required for resistance to polymyxin and cationic antimicrobial peptides. This Shewanella sediminis (strain HAW-EB3) protein is UDP-4-amino-4-deoxy-L-arabinose--oxoglutarate aminotransferase.